We begin with the raw amino-acid sequence, 81 residues long: U17-lycotoxin-Ls1a (81 aa).

The first 22 residues, 1-22 (MSSKVQAVLLLVGVITFLAVHA), serve as a signal peptide directing secretion. A propeptide spanning residues 23–34 (QEELSENTESER) is cleaved from the precursor. Cystine bridges form between C36–C51, C50–C67, and C58–C65.

It belongs to the neurotoxin 02 (plectoxin) family. As to expression, expressed by the venom gland.

It is found in the secreted. This Lycosa singoriensis (Wolf spider) protein is U17-lycotoxin-Ls1a.